The sequence spans 113 residues: Large ribosomal subunit protein uL22 (113 aa).

This sequence belongs to the universal ribosomal protein uL22 family. In terms of assembly, part of the 50S ribosomal subunit.

Functionally, this protein binds specifically to 23S rRNA; its binding is stimulated by other ribosomal proteins, e.g. L4, L17, and L20. It is important during the early stages of 50S assembly. It makes multiple contacts with different domains of the 23S rRNA in the assembled 50S subunit and ribosome. Its function is as follows. The globular domain of the protein is located near the polypeptide exit tunnel on the outside of the subunit, while an extended beta-hairpin is found that lines the wall of the exit tunnel in the center of the 70S ribosome. The polypeptide is Large ribosomal subunit protein uL22 (Roseiflexus sp. (strain RS-1)).